Consider the following 678-residue polypeptide: Translation initiation factor eIF2B subunit epsilon (678 aa).

Residue Thr-172 is modified to Phosphothreonine. The interval 467 to 489 (STNELHLSDSESSETSSSSEEDM) is disordered. Ser-500 is subject to Phosphoserine. Thr-503 carries the phosphothreonine modification. At Ser-506 the chain carries Phosphoserine. Residues 508 to 674 (DFDEGDFNKE…NTAESESESE (167 aa)) enclose the W2 domain.

Belongs to the eIF-2B gamma/epsilon subunits family. As to quaternary structure, component of the translation initiation factor 2B (eIF2B) complex which is a heterodecamer of two sets of five different subunits: alpha, beta, gamma, delta and epsilon. Subunits alpha, beta and delta comprise a regulatory subcomplex and subunits epsilon and gamma comprise a catalytic subcomplex. Within the complex, the hexameric regulatory complex resides at the center, with the two heterodimeric catalytic subcomplexes bound on opposite sides.

Its subcellular location is the cytoplasm. It localises to the cytosol. Acts as a component of the translation initiation factor 2B (eIF2B) complex, which catalyzes the exchange of GDP for GTP on the eukaryotic initiation factor 2 (eIF2) complex gamma subunit. Its guanine nucleotide exchange factor activity is repressed when bound to eIF2 complex phosphorylated on the alpha subunit, thereby limiting the amount of methionyl-initiator methionine tRNA available to the ribosome and consequently global translation is repressed. The protein is Translation initiation factor eIF2B subunit epsilon (tif225) of Schizosaccharomyces pombe (strain 972 / ATCC 24843) (Fission yeast).